The primary structure comprises 391 residues: Acetate kinase (391 aa).

Asparagine 4 serves as a coordination point for Mg(2+). Lysine 11 serves as a coordination point for ATP. Arginine 85 provides a ligand contact to substrate. Aspartate 142 serves as the catalytic Proton donor/acceptor. Residues 202–206 (HLGNG), 277–279 (DLR), and 325–329 (GIGEN) contribute to the ATP site. A Mg(2+)-binding site is contributed by glutamate 378.

The protein belongs to the acetokinase family. As to quaternary structure, homodimer. It depends on Mg(2+) as a cofactor. Requires Mn(2+) as cofactor.

It localises to the cytoplasm. The enzyme catalyses acetate + ATP = acetyl phosphate + ADP. Its pathway is metabolic intermediate biosynthesis; acetyl-CoA biosynthesis; acetyl-CoA from acetate: step 1/2. In terms of biological role, catalyzes the formation of acetyl phosphate from acetate and ATP. Can also catalyze the reverse reaction. This Halalkalibacterium halodurans (strain ATCC BAA-125 / DSM 18197 / FERM 7344 / JCM 9153 / C-125) (Bacillus halodurans) protein is Acetate kinase.